Consider the following 79-residue polypeptide: Sec-independent protein translocase protein TatA (79 aa).

The helical transmembrane segment at 1–21 (MGGLQPWHWVIVIAVFVLLFG) threads the bilayer. The span at 43–52 (IKEMQSEGKS) shows a compositional bias: basic and acidic residues. The tract at residues 43 to 79 (IKEMQSEGKSDNPPATPITSERVDTNPTAEQPDKRSA) is disordered.

This sequence belongs to the TatA/E family. As to quaternary structure, the Tat system comprises two distinct complexes: a TatABC complex, containing multiple copies of TatA, TatB and TatC subunits, and a separate TatA complex, containing only TatA subunits. Substrates initially bind to the TatABC complex, which probably triggers association of the separate TatA complex to form the active translocon.

The protein resides in the cell membrane. Functionally, part of the twin-arginine translocation (Tat) system that transports large folded proteins containing a characteristic twin-arginine motif in their signal peptide across membranes. TatA could form the protein-conducting channel of the Tat system. This is Sec-independent protein translocase protein TatA from Mycobacterium sp. (strain JLS).